The primary structure comprises 346 residues: Methionine import ATP-binding protein MetN 1 (346 aa).

Positions 2–241 constitute an ABC transporter domain; sequence IELKNVSKVF…PQHVTTKKFV (240 aa). 38–45 serves as a coordination point for ATP; that stretch reads GYSGAGKS.

This sequence belongs to the ABC transporter superfamily. Methionine importer (TC 3.A.1.24) family. As to quaternary structure, the complex is composed of two ATP-binding proteins (MetN), two transmembrane proteins (MetI) and a solute-binding protein (MetQ).

The protein localises to the cell membrane. The enzyme catalyses L-methionine(out) + ATP + H2O = L-methionine(in) + ADP + phosphate + H(+). The catalysed reaction is D-methionine(out) + ATP + H2O = D-methionine(in) + ADP + phosphate + H(+). Its function is as follows. Part of the ABC transporter complex MetNIQ involved in methionine import. Responsible for energy coupling to the transport system. The sequence is that of Methionine import ATP-binding protein MetN 1 from Bacillus cereus (strain ATCC 14579 / DSM 31 / CCUG 7414 / JCM 2152 / NBRC 15305 / NCIMB 9373 / NCTC 2599 / NRRL B-3711).